We begin with the raw amino-acid sequence, 327 residues long: Phosphate acyltransferase (327 aa).

This sequence belongs to the PlsX family. As to quaternary structure, homodimer. Probably interacts with PlsY.

Its subcellular location is the cytoplasm. The catalysed reaction is a fatty acyl-[ACP] + phosphate = an acyl phosphate + holo-[ACP]. It participates in lipid metabolism; phospholipid metabolism. Functionally, catalyzes the reversible formation of acyl-phosphate (acyl-PO(4)) from acyl-[acyl-carrier-protein] (acyl-ACP). This enzyme utilizes acyl-ACP as fatty acyl donor, but not acyl-CoA. This chain is Phosphate acyltransferase, found in Thermotoga neapolitana (strain ATCC 49049 / DSM 4359 / NBRC 107923 / NS-E).